The chain runs to 2258 residues: Probable serine/threonine-protein kinase ifkA (2258 aa).

2 disordered regions span residues 43 to 108 (RVNS…HQMG) and 189 to 308 (EMNN…KEND). Over residues 45 to 57 (NSSDDINNNNNNN) the composition is skewed to low complexity. Over residues 58 to 100 (NDDDDDNDDYDDSDDENSDSDYDDYDDSDDENSDDEFYSDDED) the composition is skewed to acidic residues. A compositionally biased stretch (low complexity) spans 191-301 (NNLTNSNNSN…NKELIDNNNN (111 aa)). Residues 273–309 (NNNNNISNNKINKINNNNNNKELIDNNNNNKDKENDL) are a coiled coil. One can recognise a Protein kinase 1 domain in the interval 319–691 (WKKGSCIERK…AGILLKHPFL (373 aa)). ATP is bound by residues 325–333 (IERKSNYSV) and lysine 348. Residues 358 to 398 (SSSSLTSLSNSNNNNSNNNNNNNNNNNNNNNNNNNNNNNNN) are disordered. A compositionally biased stretch (low complexity) spans 359–398 (SSSLTSLSNSNNNNSNNNNNNNNNNNNNNNNNNNNNNNNN). Aspartate 498 functions as the Proton acceptor in the catalytic mechanism. Disordered regions lie at residues 741–768 (KSQT…NGSN) and 782–870 (PLAT…MTPL). Residues 746-768 (NNNNDNNNLASSNELLSSSNGSN) show a composition bias toward low complexity. Residues 782–791 (PLATSSSLDN) are compositionally biased toward polar residues. A compositionally biased stretch (pro residues) spans 793 to 805 (TPPPSRPISPKPS). The segment covering 841 to 870 (PQQNFNTPPTTTTTTTTPTATPTTPTMTPL) has biased composition (low complexity). A Protein kinase 2 domain is found at 894–1482 (FEEIEMIGKG…TKQLLESGLL (589 aa)). Residues 900 to 908 (IGKGGFGVV) and lysine 923 contribute to the ATP site. The span at 1053-1094 (TLSSSNTSSSSSLLSNNKSKILNTSKSTSTNTSTSTSTSNTN) shows a compositional bias: low complexity. Residues 1053–1259 (TLSSSNTSSS…SSSRKKPPKE (207 aa)) form a disordered region. The segment covering 1095–1106 (KNKKISKKKKSK) has biased composition (basic residues). Over residues 1156 to 1185 (NNNNNNDNNNNYHSDNESDSFSGSISMSDG) the composition is skewed to low complexity. Over residues 1206–1233 (DENENDDDDEEDDDDEYDEEDDDYETFD) the composition is skewed to acidic residues. Residues 1242 to 1251 (SNNSKLSTSS) are compositionally biased toward low complexity. The Proton acceptor role is filled by aspartate 1313. Disordered stretches follow at residues 1343-1370 (KSDD…TAQQ) and 2048-2104 (GSGG…QQTS). A compositionally biased stretch (low complexity) spans 1347–1368 (LNSSTSNTANNINLSSSTNSTA). Positions 2048–2072 (GSGGSGGSGGGSSMSSGGGGGGNSN) are enriched in gly residues. The span at 2085–2099 (SNQSTSSSGNSNNSN) shows a compositional bias: low complexity.

This sequence belongs to the protein kinase superfamily. Ser/Thr protein kinase family.

The enzyme catalyses L-seryl-[protein] + ATP = O-phospho-L-seryl-[protein] + ADP + H(+). It catalyses the reaction L-threonyl-[protein] + ATP = O-phospho-L-threonyl-[protein] + ADP + H(+). Phosphorylates eIF2-alpha, from 1 to 7 hours after the onset of development or during the preaggregation state, resulting in a shift from polysomes to free ribosomes for bulk mRNA. This is Probable serine/threonine-protein kinase ifkA (ifkA) from Dictyostelium discoideum (Social amoeba).